A 503-amino-acid chain; its full sequence is ATP synthase subunit alpha (503 aa).

An ATP-binding site is contributed by 169–176 (GDRKTGKT).

Belongs to the ATPase alpha/beta chains family. In terms of assembly, F-type ATPases have 2 components, CF(1) - the catalytic core - and CF(0) - the membrane proton channel. CF(1) has five subunits: alpha(3), beta(3), gamma(1), delta(1), epsilon(1). CF(0) has three main subunits: a(1), b(2) and c(9-12). The alpha and beta chains form an alternating ring which encloses part of the gamma chain. CF(1) is attached to CF(0) by a central stalk formed by the gamma and epsilon chains, while a peripheral stalk is formed by the delta and b chains.

It is found in the cell membrane. The catalysed reaction is ATP + H2O + 4 H(+)(in) = ADP + phosphate + 5 H(+)(out). Produces ATP from ADP in the presence of a proton gradient across the membrane. The alpha chain is a regulatory subunit. This chain is ATP synthase subunit alpha, found in Lactobacillus helveticus (strain DPC 4571).